The sequence spans 412 residues: Peptidase T (412 aa).

Histidine 81 is a binding site for Zn(2+). Aspartate 83 is an active-site residue. Aspartate 144 contributes to the Zn(2+) binding site. Catalysis depends on glutamate 178, which acts as the Proton acceptor. Zn(2+) contacts are provided by glutamate 179, aspartate 201, and histidine 383.

It belongs to the peptidase M20B family. Zn(2+) is required as a cofactor.

It is found in the cytoplasm. It catalyses the reaction Release of the N-terminal residue from a tripeptide.. Cleaves the N-terminal amino acid of tripeptides. The chain is Peptidase T from Bacillus cereus (strain ZK / E33L).